The chain runs to 35 residues: Beta-amanitin proprotein (35 aa).

Residues 1–10 (MSDINATRLP) constitute a propeptide that is removed on maturation. Positions 11 to 18 (IWGIGCDP) form a cross-link, cyclopeptide (Ile-Pro). The 2'-cysteinyl-6'-hydroxytryptophan sulfoxide (Trp-Cys) cross-link spans 12-16 (WGIGC). Positions 19–35 (CVGDDVTALLTRGEALC) are excised as a propeptide.

This sequence belongs to the MSDIN fungal toxin family. Post-translationally, processed by the macrocyclase-peptidase enzyme POPB to yield a toxic cyclic octapeptide. POPB first removes 10 residues from the N-terminus. Conformational trapping of the remaining peptide forces the enzyme to release this intermediate rather than proceed to macrocyclization. The enzyme rebinds the remaining peptide in a different conformation and catalyzes macrocyclization of the N-terminal 8 residues. As to expression, expressed in basidiocarps.

Its function is as follows. Toxin belonging to the bicyclic octapeptides amatoxins that acts by binding non-competitively to RNA polymerase II and greatly slowing the elongation of transcripts from target promoters. This chain is Beta-amanitin proprotein, found in Amanita exitialis (Guangzhou destroying angel).